Here is a 389-residue protein sequence, read N- to C-terminus: Chitin-binding protein CbpD (389 aa).

An N-terminal signal peptide occupies residues 1-25; it reads MKHYSATLALLPLTLALFLPQAAHA. One can recognise a Chitin-binding type-4 domain in the interval 26–208; that stretch reads HGSMETPPSR…EAFYACIDVS (183 aa).

Can be detected in the extracellular supernatant as a 43 kDa protein and a 23 kDa protein, both proteins have the same N-terminus. Only the larger protein binds chitin, which may protect it from further processing and/or degradation by elastase (lasB). It is not clear whether the short form is functional or a degradation product.

Its subcellular location is the secreted. Functionally, binds chitin but does not hydrolyze it, has no detectable protease or staphylolytic activity. The protein is Chitin-binding protein CbpD of Pseudomonas aeruginosa (strain ATCC 15692 / DSM 22644 / CIP 104116 / JCM 14847 / LMG 12228 / 1C / PRS 101 / PAO1).